A 279-amino-acid chain; its full sequence is Aldo-keto reductase Mvan_2161 (279 aa).

The active-site Proton donor is the tyrosine 54. NADPH is bound by residues leucine 194, valine 196, isoleucine 232, arginine 234, serine 235, arginine 240, serine 243, asparagine 244, and arginine 270.

The protein belongs to the aldo/keto reductase family.

This chain is Aldo-keto reductase Mvan_2161, found in Mycolicibacterium vanbaalenii (strain DSM 7251 / JCM 13017 / BCRC 16820 / KCTC 9966 / NRRL B-24157 / PYR-1) (Mycobacterium vanbaalenii).